A 363-amino-acid chain; its full sequence is Trichocyst matrix protein T4-A (363 aa).

A signal peptide spans 1 to 17 (MARSLTILAIVFAVATA). Positions 18–52 (RVTKSESPKEILAQVNKDSFGNSILSVLQLQLATG) are excised as a propeptide. Residues 85 to 119 (VAFEKIIADLEQEIAYHQTQIVALSNLRDSTTEAL) adopt a coiled-coil conformation. A propeptide spanning residues 190 to 221 (RFEKVQAKLMESKHALFKPLINALTQLASKVD) is cleaved from the precursor. Residues 244–352 (ASLLATEERQ…EVLTQKLSAA (109 aa)) adopt a coiled-coil conformation.

The protein belongs to the TMP family. In terms of processing, two components are produced by post-translational processing from the precursor peptide.

It is found in the trichocyst. Functionally, structural protein that crystallize inside the trichocyst matrix. This chain is Trichocyst matrix protein T4-A (T4A), found in Paramecium tetraurelia.